A 258-amino-acid polypeptide reads, in one-letter code: Thyroxine 5-deiodinase (258 aa).

A helical; Signal-anchor for type II membrane protein membrane pass occupies residues 1 to 20 (AACILLFPRFLLTAVMLWLL). Residues 21-258 (DFLCIRKKML…QSPGAVVIQV (238 aa)) are Extracellular-facing. Residue selenocysteine 122 is part of the active site. Position 122 (selenocysteine 122) is a non-standard amino acid, selenocysteine.

Belongs to the iodothyronine deiodinase family. In terms of assembly, monomer. Homodimer. May undergo minor heretodimerization with DIO1 and DIO2.

The protein localises to the cell membrane. It localises to the endosome membrane. The catalysed reaction is 3,3',5'-triiodo-L-thyronine + iodide + A + H(+) = L-thyroxine + AH2. The enzyme catalyses 3,3'-diiodo-L-thyronine + iodide + A + H(+) = 3,3',5-triiodo-L-thyronine + AH2. It catalyses the reaction 3-iodo-L-thyronine + iodide + A + H(+) = 3,5-diiodo-L-thyronine + AH2. It carries out the reaction L-thyronine + iodide + A + H(+) = 3-iodo-L-thyronine + AH2. The catalysed reaction is 3',5'-diiodo-L-thyronine + iodide + A + H(+) = 3,3',5'-triiodo-L-thyronine + AH2. The enzyme catalyses 3'-iodo-L-thyronine + iodide + A + H(+) = 3,3'-diiodo-L-thyronine + AH2. It catalyses the reaction 3,3',5'-triiodothyronamine + iodide + A + H(+) = 3,3',5,5'-tetraiodothyronamine + AH2. It carries out the reaction 3',5'-diiodothyronamine + iodide + A + H(+) = 3,3',5'-triiodothyronamine + AH2. The catalysed reaction is 3,3'-diiodothyronamine + iodide + A + H(+) = 3,3',5-triiodothyronamine + AH2. The enzyme catalyses 3-iodothyronamine + iodide + A + H(+) = 3,5-diiodothyronamine + AH2. It catalyses the reaction 3'-iodothyronamine + iodide + A + H(+) = 3,3'-diiodothyronamine + AH2. It carries out the reaction thyronamine + iodide + A + H(+) = 3-iodothyronamine + AH2. Plays a crucial role in the metabolism of thyroid hormones (TH) and has specific roles in TH activation and inactivation by deiodination. Catalyzes the deiodination of L-thyroxine (T4) to 3,3',5'-triiodothyronine (rT3) and 3,5,3'-triiodothyronine (T3) to 3,3'-diiodothyronine (3,3'-T2) via inner-ring deiodination (IRD). Catalyzes the deiodination of rT3 to 3',5'-diiodothyronine (3',5'-T2), 3,3'-T2 to 3'-monoiodothyronine (3'-T1) and 3,5-diiodothyronine (3,5-T2) to 3-monoiodothyronine (3-T1) via IRD. Catalyzes the deiodination of 3-T1 to L-thyronine (T0) via outer-ring deiodination (ORD). Catalyzes the tyrosyl ring deiodinations of 3,3',5,5'-tetraiodothyronamine, 3,3',5'-triiodothyronamine, 3,5,3'-triiodothyronamine, 3,5-diiodothyronamine, 3,3'-diiodothyronamine and 3-iodothyronamine. This is Thyroxine 5-deiodinase (DIO3) from Gallus gallus (Chicken).